The sequence spans 160 residues: Transcription factor 12 (160 aa).

A disordered region spans residues 1-58; that stretch reads NKEKDENLHEPPSSDDMKSDDESSQKDIKVSSRGRTSTNEDEDLNPEQKIEREKERRM. Positions 15 to 30 are enriched in basic and acidic residues; it reads DDMKSDDESSQKDIKV. Residue Ser19 is modified to Phosphoserine. A Glycyl lysine isopeptide (Lys-Gly) (interchain with G-Cter in SUMO2) cross-link involves residue Lys29. Residue Thr36 is modified to Phosphothreonine. Ser37 bears the Phosphoserine mark. Residues 46–58 are compositionally biased toward basic and acidic residues; that stretch reads PEQKIEREKERRM. The region spanning 55-108 is the bHLH domain; it reads ERRMANNARERLRVRDINEAFKELGRMCQLHLKSEKPQTKLLILHQAVAVILSL. Glycyl lysine isopeptide (Lys-Gly) (interchain with G-Cter in SUMO2) cross-links involve residues Lys87 and Lys131. Residues 110–133 are class A specific domain; that stretch reads QQVRERNLNPKAACLKRREEEKVS. The disordered stretch occupies residues 132–160; it reads VSVVSAEPPTTLPGTHPGLSETTNPMGHM. The segment covering 139-150 has biased composition (low complexity); it reads PPTTLPGTHPGL. Residues 151-160 show a composition bias toward polar residues; that stretch reads SETTNPMGHM.

In terms of assembly, efficient DNA binding requires dimerization with another bHLH protein. Forms homo- or heterooligomers with myogenin, E12 and ITF2 proteins. Interacts with PTF1A. Interacts with RUNX1T1. Interacts with NEUROD2. Interacts with BHLHA9.

The protein resides in the nucleus. Its function is as follows. Transcriptional regulator. Involved in the initiation of neuronal differentiation. Activates transcription by binding to the E box (5'-CANNTG-3'). May be involved in the functional network that regulates the development of the GnRH axis. This chain is Transcription factor 12 (TCF12), found in Papio hamadryas (Hamadryas baboon).